A 463-amino-acid chain; its full sequence is L-seryl-tRNA(Sec) selenium transferase (463 aa).

Residue Lys-295 is modified to N6-(pyridoxal phosphate)lysine.

This sequence belongs to the SelA family. As to quaternary structure, homodecamer; pentamer of dimers. Binds only one seryl-tRNA(Sec) per dimer. Requires pyridoxal 5'-phosphate as cofactor.

It is found in the cytoplasm. The catalysed reaction is L-seryl-tRNA(Sec) + selenophosphate + H(+) = L-selenocysteinyl-tRNA(Sec) + phosphate. Its pathway is aminoacyl-tRNA biosynthesis; selenocysteinyl-tRNA(Sec) biosynthesis; selenocysteinyl-tRNA(Sec) from L-seryl-tRNA(Sec) (bacterial route): step 1/1. Functionally, converts seryl-tRNA(Sec) to selenocysteinyl-tRNA(Sec) required for selenoprotein biosynthesis. The polypeptide is L-seryl-tRNA(Sec) selenium transferase (Salmonella arizonae (strain ATCC BAA-731 / CDC346-86 / RSK2980)).